The sequence spans 332 residues: Ferredoxin--NADP reductase (332 aa).

The FAD site is built by threonine 20, glutamate 39, glutamine 47, tyrosine 52, valine 92, phenylalanine 126, aspartate 288, and threonine 329.

This sequence belongs to the ferredoxin--NADP reductase type 2 family. In terms of assembly, homodimer. The cofactor is FAD.

The enzyme catalyses 2 reduced [2Fe-2S]-[ferredoxin] + NADP(+) + H(+) = 2 oxidized [2Fe-2S]-[ferredoxin] + NADPH. The chain is Ferredoxin--NADP reductase from Geobacillus kaustophilus (strain HTA426).